Consider the following 211-residue polypeptide: Large ribosomal subunit protein uL4 (211 aa).

The tract at residues 40 to 85 (QQAHSRQGTASTLTRSEVRGGGRKPYKQKGTGRARQGSIRTPLRPG) is disordered. Over residues 41–54 (QAHSRQGTASTLTR) the composition is skewed to polar residues. Basic residues predominate over residues 60–71 (GGRKPYKQKGTG).

This sequence belongs to the universal ribosomal protein uL4 family. Part of the 50S ribosomal subunit.

One of the primary rRNA binding proteins, this protein initially binds near the 5'-end of the 23S rRNA. It is important during the early stages of 50S assembly. It makes multiple contacts with different domains of the 23S rRNA in the assembled 50S subunit and ribosome. Functionally, forms part of the polypeptide exit tunnel. This is Large ribosomal subunit protein uL4 from Prochlorococcus marinus (strain NATL2A).